Reading from the N-terminus, the 551-residue chain is Cu(2+) suppressing and bleomycin sensitive protein 1 (551 aa).

Coiled-coil stretches lie at residues 174 to 213 and 249 to 300; these read REID…EEID and NSLL…DSGK. The disordered stretch occupies residues 513–551; sequence EEKAQNSTSSDGSDDDDNGESGIDSNSNDSEPESEYQQE. The segment covering 532-541 has biased composition (low complexity); the sequence is ESGIDSNSND. The span at 542–551 shows a compositional bias: acidic residues; it reads SEPESEYQQE.

The protein belongs to the CUB1 family. As to quaternary structure, monomer. In terms of processing, phosphorylated by PKA in vitro.

The protein resides in the cytoplasm. The protein localises to the nucleus. In terms of biological role, involved in bleomycin tolerance with links to DNA repair and/or proteasome function. The sequence is that of Cu(2+) suppressing and bleomycin sensitive protein 1 (CUB1) from Saccharomyces cerevisiae (strain ATCC 204508 / S288c) (Baker's yeast).